A 433-amino-acid chain; its full sequence is Inositol hexakisphosphate kinase 1 (433 aa).

The tract at residues 100 to 160 (ETVEQDDTPE…SPKVELHSHS (61 aa)) is disordered. Residues 113 to 123 (PRRKHSRRSLH) are compositionally biased toward basic residues. The segment covering 139-149 (SFETSESSQEA) has biased composition (polar residues). A compositionally biased stretch (basic and acidic residues) spans 150 to 160 (KSPKVELHSHS). Residue S151 is modified to Phosphoserine. 220–228 (PCVLDLKMG) serves as a coordination point for substrate. Residues 359 to 383 (EVPPPCGPSTSPSSTSLEAGPSSPP) form a disordered region.

This sequence belongs to the inositol phosphokinase (IPK) family. Highly expressed in brain and testis. Detected at much lower levels in heart, kidney, liver, lung and spleen.

Its subcellular location is the cytoplasm. The protein resides in the nucleus. The enzyme catalyses 1D-myo-inositol hexakisphosphate + ATP = 5-diphospho-1D-myo-inositol 1,2,3,4,6-pentakisphosphate + ADP. The catalysed reaction is 1-diphospho-1D-myo-inositol 2,3,4,5,6-pentakisphosphate + ATP + H(+) = 1,5-bis(diphospho)-1D-myo-inositol 2,3,4,6-tetrakisphosphate + ADP. Its function is as follows. Converts inositol hexakisphosphate (InsP6) to diphosphoinositol pentakisphosphate (InsP7/PP-InsP5). Converts 1,3,4,5,6-pentakisphosphate (InsP5) to PP-InsP4. The sequence is that of Inositol hexakisphosphate kinase 1 (Ip6k1) from Mus musculus (Mouse).